A 126-amino-acid chain; its full sequence is C-type natriuretic peptide (126 aa).

The signal sequence occupies residues 1–23 (MHLSQLLACALLLTLLSLRPSEA). Residues 20 to 71 (PSEAKPGAPPKVPRTPPAEELAEPQAAGGGQKKGDKAPGGGGANLKGDRSRL) form a disordered region. Positions 24-73 (KPGAPPKVPRTPPAEELAEPQAAGGGQKKGDKAPGGGGANLKGDRSRLLR) are excised as a propeptide. Over residues 26-35 (GAPPKVPRTP) the composition is skewed to pro residues. A compositionally biased stretch (gly residues) spans 46–63 (AGGGQKKGDKAPGGGGAN). A disulfide bridge connects residues C110 and C126.

This sequence belongs to the natriuretic peptide family. Degraded by IDE (in vitro). As to expression, in the kidney, predominantly expressed in the distal tubular cells (at protein level).

Its subcellular location is the secreted. In terms of biological role, hormone which plays a role in endochondral ossification through regulation of cartilaginous growth plate chondrocytes proliferation and differentiation. May also be vasoactive and natriuretic. Acts by specifically binding and stimulating NPR2 to produce cGMP. Binds the clearance receptor NPR3. In Homo sapiens (Human), this protein is C-type natriuretic peptide (NPPC).